The following is a 101-amino-acid chain: uncharacterized protein (101 aa).

This is an uncharacterized protein from Haemophilus influenzae (strain ATCC 51907 / DSM 11121 / KW20 / Rd).